The chain runs to 172 residues: Small ribosomal subunit protein uS5 (172 aa).

The S5 DRBM domain maps to 11–74; sequence LSEVLVDVNR…QAAKKRMMKV (64 aa).

Belongs to the universal ribosomal protein uS5 family. As to quaternary structure, part of the 30S ribosomal subunit. Contacts proteins S4 and S8.

Its function is as follows. With S4 and S12 plays an important role in translational accuracy. In terms of biological role, located at the back of the 30S subunit body where it stabilizes the conformation of the head with respect to the body. This is Small ribosomal subunit protein uS5 from Rickettsia canadensis (strain McKiel).